The sequence spans 260 residues: Flap endonuclease Xni (260 aa).

D109 lines the Mg(2+) pocket. The 95-residue stretch at 165–259 folds into the 5'-3' exonuclease domain; sequence VKPSQLADYW…DIRFTGPNKA (95 aa). Positions 176, 185, 187, and 190 each coordinate K(+). Residues 189 to 194 form an interaction with DNA region; the sequence is GVGPKA.

This sequence belongs to the Xni family. The cofactor is Mg(2+). Requires K(+) as cofactor.

In terms of biological role, has flap endonuclease activity. During DNA replication, flap endonucleases cleave the 5'-overhanging flap structure that is generated by displacement synthesis when DNA polymerase encounters the 5'-end of a downstream Okazaki fragment. This chain is Flap endonuclease Xni, found in Vibrio campbellii (strain ATCC BAA-1116).